Reading from the N-terminus, the 395-residue chain is MSNIHDMEFLQKKVQELKEQGLYKELVTLEGPSDAECVINGKKVINLSSNNYLGFANHPRLKKAAIEAIEKYGAGAGAVRPIIGNMKIHDDLEKLLAEFKREEAVLAFQSGFNCNAGVIQALTDKGDLIISDQLNHASIIDGTRLSKADKAVFQHSDMADLERVLKEKRNNYNNVLIITDGVFSMDGDIAKLPEIVALAEKYNCLTYVDDAHSSGVLGESGRGTVDHFKLHGRVDVAMGTLSKAIGVVGGYVAGKKVTIDWLKNRGRPFLFSTGLPPAAVGAAIEAVKMLMESTEYTDKLWANAKHFKEGLGKLGYNIGHSETPITPIIIGDEAKTLEFSKKLFENGLFSGPIVFPTVPKGTGRVRCMVTAGHTTEQLDRAVKICEKVGKEMGII.

K24 contributes to the substrate binding site. Pyridoxal 5'-phosphate is bound at residue 111 to 112; the sequence is GF. H136 lines the substrate pocket. Pyridoxal 5'-phosphate-binding positions include S184, 209–212, and 240–243; these read DDAH and TLSK. K243 carries the post-translational modification N6-(pyridoxal phosphate)lysine. Residue T357 coordinates substrate.

The protein belongs to the class-II pyridoxal-phosphate-dependent aminotransferase family. BioF subfamily. In terms of assembly, homodimer. Requires pyridoxal 5'-phosphate as cofactor.

The catalysed reaction is 6-carboxyhexanoyl-[ACP] + L-alanine + H(+) = (8S)-8-amino-7-oxononanoate + holo-[ACP] + CO2. The protein operates within cofactor biosynthesis; biotin biosynthesis. Its function is as follows. Catalyzes the decarboxylative condensation of pimeloyl-[acyl-carrier protein] and L-alanine to produce 8-amino-7-oxononanoate (AON), [acyl-carrier protein], and carbon dioxide. The polypeptide is 8-amino-7-oxononanoate synthase (Treponema denticola (strain ATCC 35405 / DSM 14222 / CIP 103919 / JCM 8153 / KCTC 15104)).